A 302-amino-acid chain; its full sequence is Galactofuranosyltransferase GlfT1 (302 aa).

Belongs to the glycosyltransferase 2 family.

Its subcellular location is the cell membrane. The protein localises to the secreted. It localises to the cell wall. It catalyses the reaction alpha-L-rhamnosyl-(1-&gt;3)-N-acetyl-alpha-D-glucosaminyl-diphospho-trans,octa-cis-decaprenol + 2 UDP-alpha-D-galactofuranose = beta-D-galactofuranosyl-(1-&gt;5)-beta-D-galactofuranosyl-(1-&gt;4)-alpha-L-rhamnosyl-(1-&gt;3)-N-acetyl-alpha-D-glucosaminyl-diphospho-trans,octa-cis-decaprenol + 2 UDP + 2 H(+). It participates in cell wall biogenesis; cell wall polysaccharide biosynthesis. Its function is as follows. Involved in the biosynthesis of the arabinogalactan (AG) region of the mycolylarabinogalactan-peptidoglycan (mAGP) complex, an essential component of the mycobacterial cell wall. Catalyzes the transfer of the first two galactofuranosyl (Galf) units from UDP-galactofuranose (UDP-Galf) onto the rhamnosyl-GlcNAc-diphospho-decaprenol (Rha-GlcNAc-PP-C50) acceptor, yielding galactofuranosyl-galactofuranosyl-rhamnosyl-GlcNAc-diphospho-decaprenol (Galf-Galf-Rha-GlcNAc-PP-C50). Thus, GlfT1 is the initiator of galactan synthesis, while GlfT2 continues with the subsequent polymerization events. The chain is Galactofuranosyltransferase GlfT1 from Mycolicibacterium smegmatis (strain ATCC 700084 / mc(2)155) (Mycobacterium smegmatis).